The following is a 69-amino-acid chain: Small integral membrane protein 20 (69 aa).

Residues 1 to 8 (MAAARNLR) are Mitochondrial matrix-facing. Residues 9 to 29 (TALIFGGFISMVGAAFYPIYF) traverse the membrane as a helical segment. Topologically, residues 30 to 69 (RPLLRLEEYQKEQAVNRAGIVQEDVQPPGLKVWSDPFGRK) are mitochondrial intermembrane. Phe-66 is modified (phenylalanine amide).

Component of the MITRAC (mitochondrial translation regulation assembly intermediate of cytochrome c oxidase complex) complex, the core components of this complex being Coa3/Mitrac12 and Cox14. Interacts with Coa3/Mitrac12 and Cox4i1. Directly interacts with newly synthesized Mt-Co1/Cox1. In terms of tissue distribution, highly expressed in the hypothalamus, substantia nigra reticulata, Edinger-Westphal nucleus, and nucleus of the solitary tract/dorsal motor nucleus of the vagus, the spinal cord, and sensory ganglia (at protein level). Also expressed in the heart, thymus, esophagus, stomach, spleen, lung, pituitary gland, kidney, jejunum, duodenum, ileum, cerebrum, pons, and colon (at protein level). Expressed in preadipocytes and apidocytes (at protein level). Expressed in pancreatic islet cells (at protein level).

The protein localises to the mitochondrion inner membrane. It is found in the secreted. Component of the MITRAC (mitochondrial translation regulation assembly intermediate of cytochrome c oxidase complex) complex, that regulates cytochrome c oxidase assembly. Promotes the progression of complex assembly after the association of Mt-Co1/Cox11 with Cox4I1 and Cox6c. Chaperone-like assembly factor required to stabilize newly synthesized Mt-Co1/Cox1 and to prevent its premature turnover. Its function is as follows. Peptide involved in a broad spectrum of regulatory functions. Is a ligand for GPR173. As part of the reproductive cycle, it regulates gonadotropin-releasing hormone (GnRH) signaling in the hypothalamus and pituitary gland which augments the release of luteinizing hormone. More specifically, it regulates the expression of transcription factors CEBPB and POU2F1/OCT1 through the cAMP-PKA signaling pathway, which subsequently regulate the expression of GNRHR and KISS1. Plays a protective role in memory retention through activation of GNRHR. Regulates the secretion of AVP by hypothalamic neurons. Plays a role in the transduction of the itch sensation. Induces anxiolytic effects, reducing behavior associated with anxiety. Regulates food intake as well as satiation and satiety by increasing NUCB2 expression in neurons. In the ovary, it regulates follicular growth by stimulating granulosa cell proliferation by increasing the expression of GPR173, CREB1, CYP19A1, KITLG, FSHR, and LHCGR. It also increases the production of estradiol (E2). In the heart, it regulates contractility and relaxation by activating the AKT1-NOS3 and MAPK1-MAPK3 signaling pathways. It also plays a cardioprotective role during ischemia, where it activates the SAFE and RISK pathways. Stimulates the proliferation and differentiation of preadipocytes. In pancreatic islet cells, it induces proliferation of islet cells as well as the production of INS1 and INS2 through activation of the MAPK1-MAPK3 signaling pathways. The sequence is that of Small integral membrane protein 20 from Rattus norvegicus (Rat).